The chain runs to 226 residues: Protein BASIC PENTACYSTEINE7 (226 aa).

The tract at residues 42 to 116 (IDLSQEPPAE…PSIPETKREK (75 aa)) is disordered. A compositionally biased stretch (basic and acidic residues) spans 66 to 76 (RDSRNDTETVK). Positions 88–105 (LKPKPQRKKRSVSNKSKK) are enriched in basic residues.

The protein belongs to the BBR/BPC family. In terms of tissue distribution, expressed in seedlings, leaves and pistils. Detected in anthers, in pollen grains, in young rosette, in leaf vasculature, in the lateral and primary roots, in embryo sac, and in the whole ovule.

It is found in the nucleus. Functionally, transcriptional regulator that specifically binds to GA-rich elements (GAGA-repeats) present in regulatory sequences of genes involved in developmental processes. The chain is Protein BASIC PENTACYSTEINE7 (BPC7) from Arabidopsis thaliana (Mouse-ear cress).